The primary structure comprises 512 residues: Maturase K (512 aa).

The protein belongs to the intron maturase 2 family. MatK subfamily.

The protein resides in the plastid. It localises to the chloroplast. Usually encoded in the trnK tRNA gene intron. Probably assists in splicing its own and other chloroplast group II introns. The protein is Maturase K of Lilium canadense (Canada lily).